Here is a 292-residue protein sequence, read N- to C-terminus: Acetyl-coenzyme A carboxylase carboxyl transferase subunit beta (292 aa).

One can recognise a CoA carboxyltransferase N-terminal domain in the interval 29–292 (LWVKCSECGQ…HGVKDLMGAN (264 aa)). 4 residues coordinate Zn(2+): Cys-33, Cys-36, Cys-52, and Cys-55. The C4-type zinc-finger motif lies at 33–55 (CSECGQVAYRKDLISNFNVCSNC).

The protein belongs to the AccD/PCCB family. In terms of assembly, acetyl-CoA carboxylase is a heterohexamer composed of biotin carboxyl carrier protein (AccB), biotin carboxylase (AccC) and two subunits each of ACCase subunit alpha (AccA) and ACCase subunit beta (AccD). The cofactor is Zn(2+).

The protein localises to the cytoplasm. It catalyses the reaction N(6)-carboxybiotinyl-L-lysyl-[protein] + acetyl-CoA = N(6)-biotinyl-L-lysyl-[protein] + malonyl-CoA. The protein operates within lipid metabolism; malonyl-CoA biosynthesis; malonyl-CoA from acetyl-CoA: step 1/1. Functionally, component of the acetyl coenzyme A carboxylase (ACC) complex. Biotin carboxylase (BC) catalyzes the carboxylation of biotin on its carrier protein (BCCP) and then the CO(2) group is transferred by the transcarboxylase to acetyl-CoA to form malonyl-CoA. This is Acetyl-coenzyme A carboxylase carboxyl transferase subunit beta from Prochlorococcus marinus (strain MIT 9515).